The chain runs to 503 residues: Probable cytosol aminopeptidase (503 aa).

Mn(2+) is bound by residues K270 and D275. The active site involves K282. The Mn(2+) site is built by D293, D352, and E354. R356 is an active-site residue.

The protein belongs to the peptidase M17 family. The cofactor is Mn(2+).

Its subcellular location is the cytoplasm. It carries out the reaction Release of an N-terminal amino acid, Xaa-|-Yaa-, in which Xaa is preferably Leu, but may be other amino acids including Pro although not Arg or Lys, and Yaa may be Pro. Amino acid amides and methyl esters are also readily hydrolyzed, but rates on arylamides are exceedingly low.. It catalyses the reaction Release of an N-terminal amino acid, preferentially leucine, but not glutamic or aspartic acids.. In terms of biological role, presumably involved in the processing and regular turnover of intracellular proteins. Catalyzes the removal of unsubstituted N-terminal amino acids from various peptides. In Salmonella typhi, this protein is Probable cytosol aminopeptidase.